Here is a 111-residue protein sequence, read N- to C-terminus: Resistin-like alpha (111 aa).

A signal peptide spans 1–23 (MKTATCSLLICVFLLQLMVPVNT). Intrachain disulfides connect Cys55–Cys108, Cys67–Cys107, Cys76–Cys93, Cys78–Cys95, and Cys82–Cys97.

It belongs to the resistin/FIZZ family. As to quaternary structure, monomer. In terms of tissue distribution, highest levels in adipose tissue.

The protein localises to the secreted. Probable hormone. Plays a role in pulmonary vascular remodeling. The protein is Resistin-like alpha (Retnla) of Rattus norvegicus (Rat).